Consider the following 233-residue polypeptide: MSTEAETTSAAAPAPAPAPASAPARCQRIGCDATFTDDNNPDGSCQYHPSGPMFHDGMKQWSCCKQKSHDFSLFLAIPGCKTGKHTTEKPITKAVPTKPSKAVPVQTSKQSVGADTCSRCRQGFFCSDHGSQPKAQIPTATSDTNMVPVEKPAVPPPKKKIDLNEPRVCKNKGCGKTYKEKDNHDEACDYHPGPAVFRDRIRGWKCCDIHVKEFDEFMEIPPCTKGWHNADAA.

Residues 1-13 (MSTEAETTSAAAP) are compositionally biased toward low complexity. A disordered region spans residues 1–23 (MSTEAETTSAAAPAPAPAPASAP). Zn(2+) is bound by residues Cys-26, Cys-31, Cys-45, His-48, Cys-63, Cys-64, Cys-80, and His-85. The 60-residue stretch at 26 to 85 (CQRIGCDATFTDDNNPDGSCQYHPSGPMFHDGMKQWSCCKQKSHDFSLFLAIPGCKTGKH) folds into the CHORD 1 domain. The short motif at 117-137 (CSRCRQGFFCSDHGSQPKAQI) is the CCCH element. Positions 169, 174, 188, 191, 206, 207, 223, and 228 each coordinate Zn(2+). The CHORD 2 domain maps to 169-228 (CKNKGCGKTYKEKDNHDEACDYHPGPAVFRDRIRGWKCCDIHVKEFDEFMEIPPCTKGWH).

As to quaternary structure, interacts (via CHORD2 domain) with SGT1 (via CS domain). Interacts with RAC1 and RACK1A.

The protein resides in the cytoplasm. It localises to the nucleus. Functionally, involved in basal disease resistance to virulent strain of bacterial blight (X.oryzae) and compatible race of rice blast fungus (M.grisea). May act as positive regulator of basal defense. Associates with HSP90 and is essential for the pathogen-associated molecular pattern (PAMP)-triggered immune responses specifically enhanced by RAC1. The protein is Cysteine and histidine-rich domain-containing protein RAR1 (RAR1) of Oryza sativa subsp. japonica (Rice).